Here is a 393-residue protein sequence, read N- to C-terminus: Short chain dehydrogenase sirQ (393 aa).

L54 serves as a coordination point for NADP(+). S233 acts as the Proton donor in catalysis. K259 functions as the Lowers pKa of active site Tyr in the catalytic mechanism. A286 serves as a coordination point for NADP(+).

This sequence belongs to the short-chain dehydrogenases/reductases (SDR) family. Highly divergent.

Its pathway is mycotoxin biosynthesis. Short chain dehydrogenase; part of the gene cluster that mediates the biosynthesis of sirodesmin PL, an epipolythiodioxopiperazine (ETP) characterized by a disulfide bridged cyclic dipeptide and that acts as a phytotoxin which is involved in the blackleg didease of canola. SirD catalyzes the O-prenylation of L-tyrosine (L-Tyr) in the presence of dimethylallyl diphosphate (DMAPP) to yield 4-O-dimethylallyl-L-Tyr, and therefore represents probably the first pathway-specific enzyme in the biosynthesis of sirodesmin PL. 4-O-dimethylallyl-L-Tyr, then undergoes condensation with L-Ser in a reaction catalyzed by the non-ribosomal peptide synthase sirP to form the diketopiperazine (DKP) backbone. Further bishydroxylation of the DKP performed by the cytochrome P450 monooxygenase sirC leads to the production of the intermediate phomamide. This step is essential to form the reactive thiol group required for toxicity of sirodesmin PL. The next steps of sirodesmin biosynthesis are not well understood yet, but some predictions could be made from intermediate compounds identification. Phomamide is converted into phomalizarine via oxidation, probably by sirT. Further oxidation, methylation (by sirM or sirN) and reduction steps convert phomalizarine to deacetyl sirodesmin. Finally, acetyltransferase sirH probably acetylates deacetyl sirodesmin to produce sirodesmin PL. The protein is Short chain dehydrogenase sirQ of Leptosphaeria maculans (Blackleg fungus).